The chain runs to 220 residues: Uracil-DNA glycosylase (220 aa).

The active-site Proton acceptor is aspartate 60.

Belongs to the uracil-DNA glycosylase (UDG) superfamily. UNG family.

The protein localises to the cytoplasm. It carries out the reaction Hydrolyzes single-stranded DNA or mismatched double-stranded DNA and polynucleotides, releasing free uracil.. Its function is as follows. Excises uracil residues from the DNA which can arise as a result of misincorporation of dUMP residues by DNA polymerase or due to deamination of cytosine. The protein is Uracil-DNA glycosylase of Francisella tularensis subsp. holarctica (strain FTNF002-00 / FTA).